A 291-amino-acid polypeptide reads, in one-letter code: Gamma-sarcoglycan (291 aa).

Topologically, residues 1 to 37 (MVREQYTTATEGICIERPENQYVYKIGIYGWRKRCLY) are cytoplasmic. The chain crosses the membrane as a helical; Signal-anchor for type II membrane protein span at residues 38 to 58 (LFVLLLLIILVVNLALTIWIL). The Extracellular portion of the chain corresponds to 59 to 291 (KVMWFSPAGM…TCQEHNHICL (233 aa)). Residue asparagine 110 is glycosylated (N-linked (GlcNAc...) asparagine). 2 cysteine pairs are disulfide-bonded: cysteine 265-cysteine 290 and cysteine 267-cysteine 283.

Belongs to the sarcoglycan beta/delta/gamma/zeta family. In terms of assembly, interacts with the syntrophin SNTA1. Cross-link to form 2 major subcomplexes: one consisting of SGCB, SGCD and SGCG and the other consisting of SGCB and SGCD. The association between SGCB and SGCG is particularly strong while SGCA is loosely associated with the other sarcoglycans. Interacts with FLNC. Expressed in skeletal and heart muscle.

The protein resides in the cell membrane. It is found in the sarcolemma. It localises to the cytoplasm. The protein localises to the cytoskeleton. In terms of biological role, component of the sarcoglycan complex, a subcomplex of the dystrophin-glycoprotein complex which forms a link between the F-actin cytoskeleton and the extracellular matrix. In Homo sapiens (Human), this protein is Gamma-sarcoglycan (SGCG).